A 309-amino-acid chain; its full sequence is Virulence regulon transcriptional activator VirB (309 aa).

Positions Lys152 to Ala171 form a DNA-binding region, H-T-H motif.

The protein belongs to the ParB family.

Transcription activator for the invasion antigens IpaB, IpaC and IpaD. VirB is itself regulated by VirF. The chain is Virulence regulon transcriptional activator VirB (virB) from Shigella flexneri.